A 304-amino-acid chain; its full sequence is 4-diphosphocytidyl-2-C-methyl-D-erythritol kinase (304 aa).

Residue Lys20 is part of the active site. 106 to 116 (PVASGIGGGSG) is an ATP binding site. Residue Asp148 is part of the active site.

It belongs to the GHMP kinase family. IspE subfamily.

The enzyme catalyses 4-CDP-2-C-methyl-D-erythritol + ATP = 4-CDP-2-C-methyl-D-erythritol 2-phosphate + ADP + H(+). Its pathway is isoprenoid biosynthesis; isopentenyl diphosphate biosynthesis via DXP pathway; isopentenyl diphosphate from 1-deoxy-D-xylulose 5-phosphate: step 3/6. Its function is as follows. Catalyzes the phosphorylation of the position 2 hydroxy group of 4-diphosphocytidyl-2C-methyl-D-erythritol. This Bartonella bacilliformis (strain ATCC 35685 / KC583 / Herrer 020/F12,63) protein is 4-diphosphocytidyl-2-C-methyl-D-erythritol kinase.